The following is a 582-amino-acid chain: Vacuolar basic amino acid transporter 5 (582 aa).

Residues 1–44 (MEETKYSSQQEIEGACGSDASLNARGSNDSPMGLSLYLCLASLT) are Cytoplasmic-facing. A helical membrane pass occupies residues 45–65 (LVLFITALDILIVGTIIDVVA). Residues 66-80 (EQFGNYSKTGWLVTG) lie on the Vacuolar side of the membrane. Asn-70 carries N-linked (GlcNAc...) asparagine glycosylation. A helical transmembrane segment spans residues 81 to 101 (YSLPNAILSLIWGRFASIIGF). Topologically, residues 102–104 (QHS) are cytoplasmic. A helical membrane pass occupies residues 105–125 (LILAILIFEAGSLIAALASSM). Over 126–132 (NMLIFGR) the chain is Vacuolar. Residues 133–153 (VVAGVGGSGLQTLCFVIGCTM) traverse the membrane as a helical segment. Over 154–160 (VGERSRP) the chain is Cytoplasmic. Residues 161–181 (LVISILSCAFAVAAIVGPIIG) traverse the membrane as a helical segment. The Vacuolar portion of the chain corresponds to 182-191 (GAFTTHVTWR). A helical transmembrane segment spans residues 192-212 (WCFYINLPIGGLAIIMFLLTY). The Cytoplasmic segment spans residues 213 to 256 (KAENKGILQQIKDAIGTISSFTFSKFRHQVNFKRLMNGIIFKFD). Residues 257-277 (FFGFALCSAGLVLFLLGLTFG) traverse the membrane as a helical segment. Topologically, residues 278-287 (GNKYSWNSGQ) are vacuolar. Residues 288–308 (VITYLVLGVLLFIFSLVYDFF) traverse the membrane as a helical segment. The Cytoplasmic segment spans residues 309-329 (LFDKFNPEPDNISYRPLLLRR). The helical transmembrane segment at 330-350 (LVAKPAIIIVNMVTFLLCTGY) threads the bilayer. Residues 351-372 (NGQMIYSVQFFQLIFASSAWKA) are Vacuolar-facing. A helical membrane pass occupies residues 373 to 393 (GLHLIPIVITNVIAAIASGVI). Topologically, residues 394-401 (TKKLGLVK) are cytoplasmic. A helical transmembrane segment spans residues 402–422 (PLLIFGGVLGVIGAGLMTLMT). The N-linked (GlcNAc...) asparagine glycan is linked to Asn-423. Over 423 to 430 (NTSTKSTQ) the chain is Vacuolar. A helical membrane pass occupies residues 431 to 451 (IGVLLLPGFSLGFALQASLMS). Topologically, residues 452-469 (AQLQITKDRPEAAMDFIE) are cytoplasmic. The chain crosses the membrane as a helical span at residues 470-492 (VTAFNTFMKSLGTTLGGVLSTTV). The Vacuolar segment spans residues 493–539 (FSASFHNKVSRAHLEPYEGKTVDDMILYRLQNYDGSHSTIGNILSDS). A helical membrane pass occupies residues 540-560 (IKNVFWMDLGFYALGFLFCSF). Over 561–582 (SSNKKLIIPKKDDTPEDNLEDK) the chain is Cytoplasmic.

Belongs to the major facilitator superfamily.

Its subcellular location is the vacuole membrane. In terms of biological role, transporter required for vacuolar uptake of basic amino acids. The polypeptide is Vacuolar basic amino acid transporter 5 (VBA5) (Saccharomyces cerevisiae (strain ATCC 204508 / S288c) (Baker's yeast)).